The primary structure comprises 24 residues: Humanin-like 1 (24 aa).

The protein belongs to the humanin family. As to expression, highly expressed in the kidney, heart muscle and testis.

It is found in the secreted. It localises to the cytoplasm. In terms of biological role, plays a role as a neuroprotective and antiapoptotic factor. The polypeptide is Humanin-like 1 (Homo sapiens (Human)).